An 85-amino-acid chain; its full sequence is Small ribosomal subunit protein bS20 (85 aa).

Residues 1-22 are disordered; that stretch reads MANIKSAIKRAKLSEERRAHNA.

Belongs to the bacterial ribosomal protein bS20 family.

In terms of biological role, binds directly to 16S ribosomal RNA. The sequence is that of Small ribosomal subunit protein bS20 from Bacillus cytotoxicus (strain DSM 22905 / CIP 110041 / 391-98 / NVH 391-98).